The following is a 338-amino-acid chain: Replication factor C small subunit (338 aa).

53–60 (GPPGVGKT) lines the ATP pocket.

The protein belongs to the activator 1 small subunits family. RfcS subfamily. Heteromultimer composed of small subunits (RfcS) and large subunits (RfcL).

In terms of biological role, part of the RFC clamp loader complex which loads the PCNA sliding clamp onto DNA. In Methanosarcina acetivorans (strain ATCC 35395 / DSM 2834 / JCM 12185 / C2A), this protein is Replication factor C small subunit.